A 661-amino-acid polypeptide reads, in one-letter code: MELAKIGDRLNNYYNNIYTLSEKLGYSFTKISFNNIILDALSGHQRKLEIKIINIESKCNELSSEISLLRKRLGIIEEIEIPRTLIDQYECLVTYHNGIRAIYNTKKNEAKNMYKEIERLSVILGESVDEVNFVNGDFEDISDIKLEQLSAKLNELHQIYRLRKEKNIEIKEELKKLQDSLSIKLSMPADDLSKNGIKHLIIYKEKLRFSLESRKSRVDEIVNEMKNMCGKNPTSELPTNYSDKTLTLWENELSSMRKVYFVKYKTEYEFLQKRYLSLARIMFVSKKEMLFTSQFKEIPNVNRELIQSMKQEIGNLEVDLHLQGELNNMIRRYLLLESRVYKESQRMKVLSGSASQPFTLKRLQKDFQLLKAKLICALREWEEDNEKKIYVFGKPLSSRLLMIHSPPILQNQENISSNDNSKSSPESSPPARKTTGKIENKKLRNIDVQSKKSIRFPLRLASHEEPLIDRMVNQSPDTRSVSKSKRLVRETSSGCLFKNHSKSNTLSPRRKGSRHGPREPCLSPDASSSSIPVTDIKEILPSQHDTPHNSVKLTGSSTTPASVSLRQMIEPLLSRTPPKGEFTNSLDDTPTQSNVEKVDRFLENHDWETCSESSSASEDQSLCKQLSSFSLSSSDISKKLKNNLNGLHFSSDEGSKLPTFL.

Coiled-coil stretches lie at residues 38–78 (LDAL…IIEE), 100–121 (RAIY…ERLS), 143–184 (DIKL…LSIK), 304–320 (ELIQ…EVDL), and 360–387 (LKRL…DNEK). Disordered stretches follow at residues 410–446 (QNQE…LRNI), 467–562 (LIDR…TPAS), and 573–592 (LSRT…TPTQ). Residues 414–430 (NISSNDNSKSSPESSPP) show a composition bias toward low complexity. Over residues 436-445 (GKIENKKLRN) the composition is skewed to basic and acidic residues. Composition is skewed to polar residues over residues 472 to 481 (VNQSPDTRSV), 548 to 562 (HNSV…TPAS), and 582 to 592 (FTNSLDDTPTQ).

This is Meiotic coiled-coil protein 1 (mcp1) from Schizosaccharomyces pombe (strain 972 / ATCC 24843) (Fission yeast).